The following is a 200-amino-acid chain: Lipopolysaccharide core heptose(II)-phosphate phosphatase (200 aa).

Residues 1 to 25 (MLAFCRSSLKSKKYFIILLALAAIA) form the signal peptide.

The protein belongs to the phosphoglycerate mutase family. Ais subfamily.

The protein localises to the periplasm. It participates in bacterial outer membrane biogenesis; lipopolysaccharide metabolism. Catalyzes the dephosphorylation of heptose(II) of the outer membrane lipopolysaccharide core. The polypeptide is Lipopolysaccharide core heptose(II)-phosphate phosphatase (Escherichia coli O6:H1 (strain CFT073 / ATCC 700928 / UPEC)).